Here is a 340-residue protein sequence, read N- to C-terminus: UPF0324 membrane protein OB3406 (340 aa).

9 consecutive transmembrane segments (helical) span residues 12–31 (SFYT…GVLC), 36–58 (LDIM…TIGL), 94–116 (GLHA…YSLA), 126–148 (SILT…APLV), 155–177 (TAVS…TMMY), 215–237 (IAIV…IGIY), 257–276 (IPWF…IGFL), 281–303 (VNLL…GLNV), and 315–337 (VFFA…IYVM).

It belongs to the UPF0324 family.

The protein localises to the cell membrane. This Oceanobacillus iheyensis (strain DSM 14371 / CIP 107618 / JCM 11309 / KCTC 3954 / HTE831) protein is UPF0324 membrane protein OB3406.